A 169-amino-acid polypeptide reads, in one-letter code: Probable NADH dehydrogenase [ubiquinone] 1 alpha subcomplex subunit 5, mitochondrial (169 aa).

Residues 1 to 11 constitute a mitochondrion transit peptide; the sequence is MFLRAIGRPLL.

Belongs to the complex I NDUFA5 subunit family. As to quaternary structure, complex I is composed of at least 49 different subunits.

It localises to the mitochondrion inner membrane. Accessory subunit of the mitochondrial membrane respiratory chain NADH dehydrogenase (Complex I), that is believed not to be involved in catalysis. Complex I functions in the transfer of electrons from NADH to the respiratory chain. The immediate electron acceptor for the enzyme is believed to be ubiquinone. This chain is Probable NADH dehydrogenase [ubiquinone] 1 alpha subcomplex subunit 5, mitochondrial, found in Arabidopsis thaliana (Mouse-ear cress).